The primary structure comprises 253 residues: 3-deoxy-manno-octulosonate cytidylyltransferase (253 aa).

It belongs to the KdsB family.

The protein localises to the cytoplasm. The catalysed reaction is 3-deoxy-alpha-D-manno-oct-2-ulosonate + CTP = CMP-3-deoxy-beta-D-manno-octulosonate + diphosphate. It participates in nucleotide-sugar biosynthesis; CMP-3-deoxy-D-manno-octulosonate biosynthesis; CMP-3-deoxy-D-manno-octulosonate from 3-deoxy-D-manno-octulosonate and CTP: step 1/1. It functions in the pathway bacterial outer membrane biogenesis; lipopolysaccharide biosynthesis. In terms of biological role, activates KDO (a required 8-carbon sugar) for incorporation into bacterial lipopolysaccharide in Gram-negative bacteria. The polypeptide is 3-deoxy-manno-octulosonate cytidylyltransferase (Edwardsiella ictaluri (strain 93-146)).